Consider the following 278-residue polypeptide: Ribosomal RNA small subunit methyltransferase A (278 aa).

Positions 25, 27, 52, 73, 97, and 117 each coordinate S-adenosyl-L-methionine.

It belongs to the class I-like SAM-binding methyltransferase superfamily. rRNA adenine N(6)-methyltransferase family. RsmA subfamily.

The protein resides in the cytoplasm. The enzyme catalyses adenosine(1518)/adenosine(1519) in 16S rRNA + 4 S-adenosyl-L-methionine = N(6)-dimethyladenosine(1518)/N(6)-dimethyladenosine(1519) in 16S rRNA + 4 S-adenosyl-L-homocysteine + 4 H(+). Its function is as follows. Specifically dimethylates two adjacent adenosines (A1518 and A1519) in the loop of a conserved hairpin near the 3'-end of 16S rRNA in the 30S particle. May play a critical role in biogenesis of 30S subunits. The polypeptide is Ribosomal RNA small subunit methyltransferase A (Desulfitobacterium hafniense (strain DSM 10664 / DCB-2)).